A 419-amino-acid chain; its full sequence is GTPase Obg (419 aa).

The 156-residue stretch at 1-156 folds into the Obg domain; it reads MRFVDYVSIE…FYLDLQLKVM (156 aa). Residues 157-334 form the OBG-type G domain; that stretch reads ADIGLVGKPN…LEEKQKKLEI (178 aa). GTP is bound by residues 163–170, 188–192, 209–212, 278–281, and 315–317; these read GKPNAGKS, FTTLV, DLPG, NKCD, and NII. Residues Ser170 and Thr190 each contribute to the Mg(2+) site. The 78-residue stretch at 342–419 folds into the OCT domain; that stretch reads IEFNLKAPFL…RIYEFEFHWN (78 aa).

This sequence belongs to the TRAFAC class OBG-HflX-like GTPase superfamily. OBG GTPase family. Monomer. Mg(2+) is required as a cofactor.

The protein localises to the cytoplasm. In terms of biological role, an essential GTPase which binds GTP, GDP and possibly (p)ppGpp with moderate affinity, with high nucleotide exchange rates and a fairly low GTP hydrolysis rate. Plays a role in control of the cell cycle, stress response, ribosome biogenesis and in those bacteria that undergo differentiation, in morphogenesis control. The sequence is that of GTPase Obg from Mesomycoplasma hyopneumoniae (strain 232) (Mycoplasma hyopneumoniae).